Reading from the N-terminus, the 84-residue chain is uncharacterized protein (84 aa).

Basic residues-rich tracts occupy residues methionine 1–histidine 15 and histidine 67–phenylalanine 84. Disordered regions lie at residues methionine 1–threonine 22 and threonine 64–phenylalanine 84.

This is an uncharacterized protein from Dictyostelium discoideum (Social amoeba).